The following is a 123-amino-acid chain: Large ribosomal subunit protein uL29 (123 aa).

The protein belongs to the universal ribosomal protein uL29 family. In terms of assembly, component of the large ribosomal subunit.

Its subcellular location is the cytoplasm. Functionally, component of the large ribosomal subunit. The ribosome is a large ribonucleoprotein complex responsible for the synthesis of proteins in the cell. Plays an essential role in early embryonic development. May act as a haploinsufficient tumor suppressor. The polypeptide is Large ribosomal subunit protein uL29 (rpl35) (Danio rerio (Zebrafish)).